A 26-amino-acid chain; its full sequence is Muscarinic toxin-like protein 1 (26 aa).

This sequence belongs to the three-finger toxin family. Short-chain subfamily. Orphan group VIII (haditoxin) sub-subfamily. In terms of assembly, homodimer; non-covalently linked. As to expression, expressed by the venom gland.

The protein resides in the secreted. Antagonist of muscle and neuronal nicotinic acetylcholine receptors (nAChR) with highest affinity for neuronal alpha-7/CHRNA7 nAChRs. This is Muscarinic toxin-like protein 1 from Naja naja (Indian cobra).